A 1125-amino-acid chain; its full sequence is tRNA (34-2'-O)-methyltransferase regulator WDR6 (1125 aa).

N-acetylmethionine is present on Met1. WD repeat units follow at residues 53-97 (VKRV…VVKV), 105-143 (RELW…LYDP), 147-189 (CMLQ…IWYP), 200-238 (APDR…LWKV), 247-285 (RVQN…VWSH), 289-327 (ILQA…LWHL), 335-376 (LGVS…LYDL), 381-422 (WEQL…VVPI), 425-470 (PTAA…ISAA), 476-520 (IFVK…LFPV), 559-598 (PVST…FVHG), 604-642 (VLRQ…VWSP), 645-684 (HEKL…LYRA), 739-785 (LIDI…VWAV), 848-897 (RNKH…LFLL), 905-950 (HLLA…FWDL), 974-1016 (GTPS…VFTL), 1040-1077 (EEYS…FWRL), and 1083-1125 (TFMN…NWYD).

This sequence belongs to the WD repeat WDR6 family. Interacts with FTSJ1; the interaction is direct, and required for 2'-O-methylation of position 34 in substrate tRNAs. Interacts with IRS4. Interacts with STK11/LKB1.

It localises to the cytoplasm. Its function is as follows. Together with methyltransferase FTSJ1, methylates the 2'-O-ribose of nucleotides at position 34 of the tRNA anticodon loop of substrate tRNAs. Required for the correct positioning of the substrate tRNA for methylation. Required to suppress amino acid starvation-induced autophagy. Enhances the STK11/LKB1-induced cell growth suppression activity. This is tRNA (34-2'-O)-methyltransferase regulator WDR6 (Wdr6) from Mus musculus (Mouse).